Reading from the N-terminus, the 1044-residue chain is Eukaryotic translation initiation factor 3 subunit A (1044 aa).

A coiled-coil region spans residues 92-121 (LKKFIELAEKKVTEAQAKADEIQSSLESAA). In terms of domain architecture, PCI spans 339 to 523 (MTKAASFVLL…GVLTFDTDIF (185 aa)). The stretch at 611–907 (IDKKKEAATD…EARRAARKAG (297 aa)) forms a coiled coil. Over residues 797 to 901 (SEKRHEEFEK…QREEEAEARR (105 aa)) the composition is skewed to basic and acidic residues. The disordered stretch occupies residues 797–1044 (SEKRHEEFEK…WVPRWKQQQS (248 aa)). Composition is skewed to low complexity over residues 943-956 (KEAA…AAPA) and 1006-1017 (SSSSQPPSRTQT).

It belongs to the eIF-3 subunit A family. In terms of assembly, component of the eukaryotic translation initiation factor 3 (eIF-3) complex.

The protein localises to the cytoplasm. Its function is as follows. RNA-binding component of the eukaryotic translation initiation factor 3 (eIF-3) complex, which is involved in protein synthesis of a specialized repertoire of mRNAs and, together with other initiation factors, stimulates binding of mRNA and methionyl-tRNAi to the 40S ribosome. The eIF-3 complex specifically targets and initiates translation of a subset of mRNAs involved in cell proliferation. This chain is Eukaryotic translation initiation factor 3 subunit A (tif32), found in Aspergillus clavatus (strain ATCC 1007 / CBS 513.65 / DSM 816 / NCTC 3887 / NRRL 1 / QM 1276 / 107).